A 118-amino-acid polypeptide reads, in one-letter code: uncharacterized protein (118 aa).

Residues 98–118 (KGKGNEGREEAEEPLEEPEEG) form a disordered region. Positions 106-118 (EEAEEPLEEPEEG) are enriched in acidic residues.

It belongs to the UPF0440 family.

This is an uncharacterized protein from Pyrococcus abyssi (strain GE5 / Orsay).